Here is a 146-residue protein sequence, read N- to C-terminus: Leghemoglobin 49 (146 aa).

The Globin domain maps to 2–146; it reads GFTQQQEALV…LATAIKKAMS (145 aa). A nitrated tyrosine mark is found at Tyr-24 and Tyr-29. Heme b is bound at residue Ser-44. Ser-44 is modified (phosphoserine). His-61 is an O2 binding site. Heme b is bound by residues His-93 and Lys-96. Tyr-134 carries the post-translational modification Nitrated tyrosine.

The protein belongs to the plant globin family. As to quaternary structure, monomer. Nitrated in effective nodules and particularly in hypoxic conditions; this mechanism may play a protective role in the symbiosis by buffering toxic peroxynitrite NO(2)(-). Nitration level decrease during nodule senescence. Post-translationally, phosphorylation at Ser-44 disrupts the molecular environment of its porphyrin ring oxygen binding pocket, thus leading to a reduced oxygen consumption and to the delivery of oxygen O(2) to symbiosomes. Accumulates in root nodules after inoculation by bacteria of the genus Rhizobium.

The protein localises to the cytoplasm. It localises to the cytosol. It is found in the nucleus. Its function is as follows. Leghemoglobin that reversibly binds oxygen O(2) through a pentacoordinated heme iron. In root nodules, facilitates the diffusion of oxygen to the bacteroids while preventing the bacterial nitrogenase from being inactivated by buffering dioxygen, nitric oxide and carbon monoxide, and promoting the formation of reactive oxygen species (ROS, e.g. H(2)O(2)). This role is essential for symbiotic nitrogen fixation (SNF). This chain is Leghemoglobin 49, found in Vicia faba (Broad bean).